The sequence spans 275 residues: Large ribosomal subunit protein uL2 (275 aa).

Positions 224-251 (VMNPVDHPHGGGEGRSPIGRKAPVTPWG) are disordered.

The protein belongs to the universal ribosomal protein uL2 family. As to quaternary structure, part of the 50S ribosomal subunit. Forms a bridge to the 30S subunit in the 70S ribosome.

Functionally, one of the primary rRNA binding proteins. Required for association of the 30S and 50S subunits to form the 70S ribosome, for tRNA binding and peptide bond formation. It has been suggested to have peptidyltransferase activity; this is somewhat controversial. Makes several contacts with the 16S rRNA in the 70S ribosome. This is Large ribosomal subunit protein uL2 from Heliobacterium modesticaldum (strain ATCC 51547 / Ice1).